The sequence spans 603 residues: Myotubularin (603 aa).

Polar residues predominate over residues 1-13 (MASASTSKYNSHS). The disordered stretch occupies residues 1–25 (MASASTSKYNSHSLENESIKRTSRD). 2 positions are modified to phosphoserine: serine 13 and serine 18. Basic and acidic residues predominate over residues 14–25 (LENESIKRTSRD). In terms of domain architecture, GRAM spans 29–97 (RDLTEAVPRL…GVISRIEKMG (69 aa)). The Myotubularin phosphatase domain maps to 163–538 (GWTVYNPVEE…RHLELWVNYY (376 aa)). Positions 288, 313, and 314 each coordinate a 1,2-diacyl-sn-glycero-3-phospho-(1D-myo-inositol-3,5-bisphosphate). Residues asparagine 288, asparagine 313, and isoleucine 314 each contribute to the a 1,2-diacyl-sn-glycero-3-phospho-(1D-myo-inositol-3-phosphate) site. The Phosphocysteine intermediate role is filled by cysteine 375. Positions 376, 377, 378, 379, 380, 381, 417, and 421 each coordinate a 1,2-diacyl-sn-glycero-3-phospho-(1D-myo-inositol-3,5-bisphosphate). A 1,2-diacyl-sn-glycero-3-phospho-(1D-myo-inositol-3-phosphate) contacts are provided by serine 376, aspartate 377, glycine 378, tryptophan 379, aspartate 380, and arginine 381. Residue arginine 421 coordinates a 1,2-diacyl-sn-glycero-3-phospho-(1D-myo-inositol-3-phosphate). Position 495 is a phosphothreonine (threonine 495). The interval 579–603 (SAKLSDPPTSPSSPSQMMPHVQTHF) is disordered. The residue at position 588 (serine 588) is a Phosphoserine.

This sequence belongs to the protein-tyrosine phosphatase family. Non-receptor class myotubularin subfamily. Heterodimer with MTMR12. Interacts with KMT2A/MLL1 (via SET domain). Interacts with DES in skeletal muscle but not in cardiac muscle. Interacts with SPEG.

The protein localises to the cytoplasm. The protein resides in the cell membrane. Its subcellular location is the cell projection. It localises to the filopodium. It is found in the ruffle. The protein localises to the late endosome. The protein resides in the myofibril. Its subcellular location is the sarcomere. It catalyses the reaction a 1,2-diacyl-sn-glycero-3-phospho-(1D-myo-inositol-3-phosphate) + H2O = a 1,2-diacyl-sn-glycero-3-phospho-(1D-myo-inositol) + phosphate. It carries out the reaction a 1,2-diacyl-sn-glycero-3-phospho-(1D-myo-inositol-3,5-bisphosphate) + H2O = a 1,2-diacyl-sn-glycero-3-phospho-(1D-myo-inositol-5-phosphate) + phosphate. The enzyme catalyses 1,2-dioctanoyl-sn-glycero-3-phospho-(1-D-myo-inositol-3-phosphate) + H2O = 1,2-dioctanoyl-sn-glycero-3-phospho-(1D-myo-inositol) + phosphate. The catalysed reaction is 1,2-dioctanoyl-sn-glycero-3-phospho-(1D-myo-inositol-3,5-bisphosphate) + H2O = 1,2-dioctanoyl-sn-glycero-3-phospho-(1D-myo-inositol-5-phosphate) + phosphate. It catalyses the reaction 1,2-dihexadecanoyl-sn-glycero-3-phospho-(1D-myo-inositol-3,5-phosphate) + H2O = 1,2-dihexadecanoyl-sn-glycero-3-phospho-(1D-myo-inositol-5-phosphate) + phosphate. Its activity is regulated as follows. Allosterically activated by phosphatidylinositol 5-phosphate (PI5P). Lipid phosphatase which dephosphorylates phosphatidylinositol 3-monophosphate (PI3P) and phosphatidylinositol 3,5-bisphosphate (PI(3,5)P2). Has also been shown to dephosphorylate phosphotyrosine- and phosphoserine-containing peptides. Negatively regulates EGFR degradation through regulation of EGFR trafficking from the late endosome to the lysosome. Plays a role in vacuolar formation and morphology. Regulates desmin intermediate filament assembly and architecture. Plays a role in mitochondrial morphology and positioning. Required for skeletal muscle maintenance but not for myogenesis. In skeletal muscles, stabilizes MTMR12 protein levels. This chain is Myotubularin, found in Pongo abelii (Sumatran orangutan).